The chain runs to 252 residues: Receptor expression-enhancing protein 3-B (252 aa).

The next 3 membrane-spanning stretches (helical) occupy residues 1–21 (MVSGMICKAVVLVFGILYPAY), 35–55 (YVRWMMYWIVFALYTVTETIA), and 57–77 (LTVSWFPLYFELKIAFVVWLL). The disordered stretch occupies residues 163–225 (ETAETRFFPD…GLRRSQSMRS (63 aa)). A compositionally biased stretch (acidic residues) spans 198–211 (RTDEDVEVNSEDEV).

This sequence belongs to the DP1 family.

The protein localises to the endoplasmic reticulum membrane. In terms of biological role, microtubule-binding protein required to ensure proper cell division and nuclear envelope reassembly by sequestering the endoplasmic reticulum away from chromosomes during mitosis. Probably acts by clearing the endoplasmic reticulum membrane from metaphase chromosomes. This Xenopus laevis (African clawed frog) protein is Receptor expression-enhancing protein 3-B (reep3-b).